Consider the following 78-residue polypeptide: Small outer capsid protein (78 aa).

It belongs to the Tevenvirinae Soc family. As to quaternary structure, homotrimer. Interacts with the major capsid protein; three soc molecules associate with each interface between the major capsid protein facets.

It localises to the virion. Its function is as follows. Capsid decoration protein which helps to stabilize the capsid against extremes of pH and temperature. Once maturation and expansion of the capsid has occured, trimers of soc attach the interfaces between the hexamer of the major capsid protein. Acts as a 'glue' between neighboring hexameric capsomers. Dispensable for the head morphogenesis and phage infection. In Escherichia phage RB69 (Bacteriophage RB69), this protein is Small outer capsid protein.